The following is a 490-amino-acid chain: Transmembrane protein 185-like (490 aa).

A compositionally biased stretch (low complexity) spans 1–31 (MIENENTSLLSTSSSSTSSSPNNANSPSSLN). Disordered stretches follow at residues 1 to 151 (MIEN…SKYK) and 455 to 490 (NMINNQDSSESESDDETEVSFKDREDEESEKLISNL). The span at 47-59 (TSGNNSPSAQITK) shows a compositional bias: polar residues. Composition is skewed to low complexity over residues 66-80 (SNNSSRNSSRPNSRS) and 89-108 (NNNNNNNNNNNNNNNNNNIN). The span at 109–125 (KHNSIVYNKSNNKLNSI) shows a compositional bias: polar residues. Over residues 133–145 (QGGGGGNGNGNGN) the composition is skewed to gly residues. Positions 463–472 (SESESDDETE) are enriched in acidic residues.

This sequence belongs to the TMEM185 family.

This chain is Transmembrane protein 185-like, found in Dictyostelium discoideum (Social amoeba).